We begin with the raw amino-acid sequence, 198 residues long: Dynein light chain Tctex-type protein 2 (198 aa).

A disordered region spans residues 1–34; it reads MEKRGRGVKSSPIQTPNQTPQQAPVTPRKERRPS. Residues 11-24 show a composition bias toward polar residues; sequence SPIQTPNQTPQQAP.

The protein belongs to the dynein light chain Tctex-type family. Interacts with CCDC159. Interacts with CSNK2B. As to expression, expressed predominantly in testis. Also expressed in brain, lung and trachea.

The protein resides in the cytoplasm. It is found in the cytoskeleton. The protein localises to the cytoplasmic granule. It localises to the membrane. In terms of biological role, may be an accessory component of axonemal dynein and cytoplasmic dynein 1. Candidate for involvement in male sterility. This Homo sapiens (Human) protein is Dynein light chain Tctex-type protein 2.